A 616-amino-acid chain; its full sequence is Chaperone protein HscA homolog (616 aa).

This sequence belongs to the heat shock protein 70 family.

Chaperone involved in the maturation of iron-sulfur cluster-containing proteins. Has a low intrinsic ATPase activity which is markedly stimulated by HscB. The protein is Chaperone protein HscA homolog of Vibrio cholerae serotype O1 (strain M66-2).